A 440-amino-acid chain; its full sequence is Adenylosuccinate synthetase (440 aa).

GTP-binding positions include 12–18 (GDEGKGK) and 40–42 (GHT). Asp-13 (proton acceptor) is an active-site residue. The Mg(2+) site is built by Asp-13 and Gly-40. Residues 13–16 (DEGK), 38–41 (NAGH), Thr-128, Arg-142, Gln-223, Thr-238, and Arg-302 contribute to the IMP site. Residue His-41 is the Proton donor of the active site. 298-304 (TTTGRPR) lines the substrate pocket. GTP-binding positions include Arg-304, 330-332 (KLD), and 412-414 (SVG).

Belongs to the adenylosuccinate synthetase family. In terms of assembly, homodimer. It depends on Mg(2+) as a cofactor.

It is found in the cytoplasm. It catalyses the reaction IMP + L-aspartate + GTP = N(6)-(1,2-dicarboxyethyl)-AMP + GDP + phosphate + 2 H(+). Its pathway is purine metabolism; AMP biosynthesis via de novo pathway; AMP from IMP: step 1/2. Plays an important role in the de novo pathway of purine nucleotide biosynthesis. Catalyzes the first committed step in the biosynthesis of AMP from IMP. The chain is Adenylosuccinate synthetase from Gloeobacter violaceus (strain ATCC 29082 / PCC 7421).